The chain runs to 61 residues: Conotoxin Tx-D021 (61 aa).

Positions 1–22 (MRCLPVFVILLLLIASTPSVDA) are cleaved as a signal peptide. Positions 23 to 48 (RAKTRDDMSLASFHDDAKRILQILQD) are excised as a propeptide. Cys60 is modified (cysteine amide).

It belongs to the conotoxin T superfamily. In terms of processing, contains 2 disulfide bonds that can be either 'C1-C3, C2-C4' or 'C1-C4, C2-C3', since these disulfide connectivities have been observed for conotoxins with cysteine framework V (for examples, see AC P0DQQ7 and AC P81755). As to expression, expressed by the venom duct.

Its subcellular location is the secreted. This chain is Conotoxin Tx-D021, found in Conus textile (Cloth-of-gold cone).